The primary structure comprises 101 residues: Small ribosomal subunit protein bS18c (101 aa).

Residues 1 to 19 (MNKSKRPFTKSKRSFRRRL) show a composition bias toward basic residues. The segment at 1-23 (MNKSKRPFTKSKRSFRRRLPPIQ) is disordered.

Belongs to the bacterial ribosomal protein bS18 family. Part of the 30S ribosomal subunit.

It localises to the plastid. Its subcellular location is the chloroplast. The sequence is that of Small ribosomal subunit protein bS18c from Lobularia maritima (Sweet alyssum).